The following is a 345-amino-acid chain: MYNFLEFFFFFITYTLFKSTFVQGKSSFPGHDVCKFEDQNFQTEFFLNVLKGDKLQNLKQEYEQYKKQSTLYTGFVIEKQYEYQVAPLQINNFLQVTFCKGGKPIWNHILPFQKDLDWAEPLCIPAQEDDTISQNSSVCFKFARVQKYTQRNVTLYFPNKFVGFVFVCNSSKTHPPTQNNFETIPLTPIISDDIRDYKISWSIKGRITKVVPYLHSLSIPMSKYEMLIHSDKNISNELEYKSLTSEFWKSYKNLRKFKNKEMSWINEINPMEQYDSSGNENVPNFHEKLDRTINRIAQNIERPHDALIRAIAAHNRNSNSGNITRRKYLRRKISKMLKNKIPLKN.

This is an uncharacterized protein from Saccharomyces cerevisiae (strain ATCC 204508 / S288c) (Baker's yeast).